We begin with the raw amino-acid sequence, 464 residues long: Meiotic plaque component protein 54 (464 aa).

Residues 71-102 are disordered; it reads SISTTITPNKSSLKSPRGKRASKNSFDNETKL. 3 coiled-coil regions span residues 99-119, 156-193, and 231-365; these read ETKLESKNETLKEVNDAVNRC, KAECERSKNAIDSLYYHEQLEKKELNEKSLQMAIDHLL, and SINS…LQTQ.

Interacts directly with SPO21/MPC70, NUD1, SPO74 and SPC42. Probable component of a spindle pole body (SPB) complex composed of ADY3, SSP1, DON1, MPC54, SPO21/MPC70, NUD1 and CNM67.

The protein localises to the prospore membrane. The protein resides in the cytoplasm. Its subcellular location is the cytoskeleton. It is found in the microtubule organizing center. It localises to the spindle pole body. The protein localises to the spindle pole. Functionally, involved in the pathway that organizes the shaping and sizing of the prospore membrane (PSM) during sporulation. In Saccharomyces cerevisiae (strain ATCC 204508 / S288c) (Baker's yeast), this protein is Meiotic plaque component protein 54 (MPC54).